Reading from the N-terminus, the 410-residue chain is Calsequestrin-2 (410 aa).

A signal peptide spans 1–19; it reads MKRTHLFIAGLYLLASCRA. The segment at 221–242 is calcium regulated hydrophobic site; it reads MDEPIAIPDKPYTEEELVEFVK. Tyr-282 is subject to Phosphotyrosine. N-linked (GlcNAc...) asparagine glycans are attached at residues Asn-335 and Asn-395. The interval 364 to 410 is disordered; sequence DVLSGKINTEDDDNEEGDDGDDDEDDDDDDGNNSDEESNDDSDDDDE. Over residues 373–410 the composition is skewed to acidic residues; sequence EDDDNEEGDDGDDDEDDDDDDGNNSDEESNDDSDDDDE. Ser-397, Ser-401, and Ser-405 each carry phosphoserine; by CK2.

Belongs to the calsequestrin family. Interacts with ASPH. Monomer, homodimer and homooligomer. Mostly monomeric in the absence of calcium. Forms higher oligomers in a calcium-dependent manner. Dimers associate to form tetramers, that then form linear homomer chains. Interacts with TRDN. Post-translationally, phosphorylation in the C-terminus, probably by CK2, moderately increases calcium buffering capacity. In terms of processing, N-glycosylated. In terms of tissue distribution, detected in heart muscle (at protein level).

The protein resides in the sarcoplasmic reticulum lumen. Functionally, calsequestrin is a high-capacity, moderate affinity, calcium-binding protein and thus acts as an internal calcium store in muscle. Calcium ions are bound by clusters of acidic residues at the protein surface, especially at the interface between subunits. Can bind around 60 Ca(2+) ions. Regulates the release of lumenal Ca(2+) via the calcium release channel RYR2; this plays an important role in triggering muscle contraction. Plays a role in excitation-contraction coupling in the heart and in regulating the rate of heart beats. In Canis lupus familiaris (Dog), this protein is Calsequestrin-2 (CASQ2).